A 545-amino-acid chain; its full sequence is Membrane protein insertase YidC (545 aa).

A helical membrane pass occupies residues 6-26 (NILLIGLLFVSFLLWQQWQAD). A disordered region spans residues 44-65 (STVADAHSSDVPDADSAVPEAT). The next 4 helical transmembrane spans lie at 346–366 (LLMF…LITL), 424–444 (GGCL…WVLL), 461–481 (LSVQ…MFVM), and 504–524 (VIFT…WLVG).

It belongs to the OXA1/ALB3/YidC family. Type 1 subfamily. In terms of assembly, interacts with the Sec translocase complex via SecD. Specifically interacts with transmembrane segments of nascent integral membrane proteins during membrane integration.

It localises to the cell inner membrane. Its function is as follows. Required for the insertion and/or proper folding and/or complex formation of integral membrane proteins into the membrane. Involved in integration of membrane proteins that insert both dependently and independently of the Sec translocase complex, as well as at least some lipoproteins. Aids folding of multispanning membrane proteins. In Shewanella pealeana (strain ATCC 700345 / ANG-SQ1), this protein is Membrane protein insertase YidC.